Reading from the N-terminus, the 360-residue chain is Mannose-1-phosphate guanylyltransferase catalytic subunit beta (360 aa).

The substrate-binding domain stretch occupies residues 2-222 (KALILVGGYG…QGFWMDIGQP (221 aa)). GDP-alpha-D-mannose is bound at residue Asp-110. Asp-110 contacts Mg(2+). Residue Lys-162 is part of the active site. Residue Asp-218 coordinates GDP-alpha-D-mannose. Residues 245–360 (YSGPGIVGNV…ESVPEPRIIM (116 aa)) are hexapeptide repeat domain.

This sequence belongs to the transferase hexapeptide repeat family. In terms of assembly, component of the GMPPA-GMPPB mannose-1-phosphate guanylyltransferase complex composed of 4 GMPPA subunits and 8 GMPPB subunits; the complex is organized into three layers, a central layer made up of 2 GMPPA dimers sandwiched between two layers each made up of 2 GMPPB dimers. GMPPB catalytic activity is reduced when part of the complex and binding of GDP-alpha-D-Mannose by GMPPA induces allosteric feedback inhibition of GMPPB. Mg(2+) is required as a cofactor.

Its subcellular location is the cytoplasm. The catalysed reaction is alpha-D-mannose 1-phosphate + GTP + H(+) = GDP-alpha-D-mannose + diphosphate. It participates in nucleotide-sugar biosynthesis; GDP-alpha-D-mannose biosynthesis; GDP-alpha-D-mannose from alpha-D-mannose 1-phosphate (GTP route): step 1/1. Enzyme activity is reduced by incorporation into the GMPPA-GMPPB mannose-1-phosphate guanylyltransferase complex. Allosterically inhibited, when part of the GMPPA-GMPPB complex, by GDP-alpha-D-mannose binding to GMPPA. Catalytic subunit of the GMPPA-GMPPB mannose-1-phosphate guanylyltransferase complex. Catalyzes the formation of GDP-mannose, an essential precursor of glycan moieties of glycoproteins and glycolipids. Can catalyze the reverse reaction in vitro. Together with GMPPA regulates GDP-alpha-D-mannose levels. In Mus musculus (Mouse), this protein is Mannose-1-phosphate guanylyltransferase catalytic subunit beta.